Reading from the N-terminus, the 463-residue chain is Exodeoxyribonuclease 7 large subunit (463 aa).

It belongs to the XseA family. As to quaternary structure, heterooligomer composed of large and small subunits.

It localises to the cytoplasm. It catalyses the reaction Exonucleolytic cleavage in either 5'- to 3'- or 3'- to 5'-direction to yield nucleoside 5'-phosphates.. Functionally, bidirectionally degrades single-stranded DNA into large acid-insoluble oligonucleotides, which are then degraded further into small acid-soluble oligonucleotides. The sequence is that of Exodeoxyribonuclease 7 large subunit from Klebsiella pneumoniae subsp. pneumoniae (strain ATCC 700721 / MGH 78578).